Consider the following 192-residue polypeptide: Thymidylate kinase (192 aa).

Gly7 to Ser14 contributes to the ATP binding site.

The protein belongs to the thymidylate kinase family.

It carries out the reaction dTMP + ATP = dTDP + ADP. Phosphorylation of dTMP to form dTDP in both de novo and salvage pathways of dTTP synthesis. This is Thymidylate kinase from Campylobacter jejuni subsp. jejuni serotype O:23/36 (strain 81-176).